The following is a 147-amino-acid chain: Augurin (147 aa).

An N-terminal signal peptide occupies residues 1 to 31 (MANSSARPAFLVMTALALLLLLCVGPGGISG). 2 consecutive propeptides follow at residues 32-68 (NKLK…LRRP) and 132-147 (SAHS…YDDY).

This sequence belongs to the augurin family.

It localises to the secreted. Its subcellular location is the cytoplasm. The protein resides in the apical cell membrane. In terms of biological role, probable hormone that may attenuate cell proliferation and induce senescence of oligodendrocyte and neural precursor cells in the central nervous system. ECRG4-induced senescence is characterized by G1 arrest, RB1 dephosphorylation and accelerated CCND1 and CCND3 proteasomal degradation. This chain is Augurin, found in Bos taurus (Bovine).